A 336-amino-acid polypeptide reads, in one-letter code: TGGKSYTCTECGKGFIKKSRLVTHMKIHTGETHFICTECGKGFSQKGILQTHMKTHTGEKPFTCTECGKNFAQITTLLRHLTIHTGEKPFSCTECGKHFAHKGHLVSHMKTHTGEKPFTCTECGKHFAQKGHLVSHMKTHTGEKPFTCTECGKNFAQKTNLLCHLKIHTGEKPFTCTECGDKFAKKNNLLRHLKIHTGEKPFTCTECGKAFTLKGSLVGHMKIHTGEKPFSCTQCGKNFTQKNSLLCHLTMHTGEKPFTCTECGKGFALKGNLVLHTKIHTGEKPFSCTQCGKNFAQKNSLLRHLKIHTREKPFTYSECGKKYSQIVNLASHMKIH.

11 consecutive C2H2-type zinc fingers follow at residues 6–28, 34–56, 62–84, 90–112, 118–140, 146–168, 174–196, 202–224, 230–252, 258–280, and 286–308; these read YTCT…MKIH, FICT…MKTH, FTCT…LTIH, FSCT…MKTH, FTCT…MKTH, FTCT…LKIH, FTCT…MKIH, FSCT…LTMH, FTCT…TKIH, and FSCT…LKIH.

The protein belongs to the krueppel C2H2-type zinc-finger protein family.

The protein resides in the nucleus. Functionally, may be involved in transcriptional regulation. This Xenopus laevis (African clawed frog) protein is Gastrula zinc finger protein XlCGF57.1.